We begin with the raw amino-acid sequence, 647 residues long: Threonine--tRNA ligase (647 aa).

The TGS domain occupies 1-61 (MIKITFPDGA…EEDGSIEIVT (61 aa)). Residues 240 to 538 (DHRKLGKELD…LIETYKGAFP (299 aa)) are catalytic. Zn(2+) contacts are provided by C334, H385, and H515.

It belongs to the class-II aminoacyl-tRNA synthetase family. As to quaternary structure, homodimer. It depends on Zn(2+) as a cofactor.

The protein resides in the cytoplasm. It carries out the reaction tRNA(Thr) + L-threonine + ATP = L-threonyl-tRNA(Thr) + AMP + diphosphate + H(+). Functionally, catalyzes the attachment of threonine to tRNA(Thr) in a two-step reaction: L-threonine is first activated by ATP to form Thr-AMP and then transferred to the acceptor end of tRNA(Thr). Also edits incorrectly charged L-seryl-tRNA(Thr). The sequence is that of Threonine--tRNA ligase from Streptococcus agalactiae serotype III (strain NEM316).